Reading from the N-terminus, the 272-residue chain is tRNA pseudouridine synthase A (272 aa).

The Nucleophile role is filled by Asp-51. Substrate is bound at residue Tyr-109.

Belongs to the tRNA pseudouridine synthase TruA family. As to quaternary structure, homodimer.

It catalyses the reaction uridine(38/39/40) in tRNA = pseudouridine(38/39/40) in tRNA. Formation of pseudouridine at positions 38, 39 and 40 in the anticodon stem and loop of transfer RNAs. The polypeptide is tRNA pseudouridine synthase A (Verminephrobacter eiseniae (strain EF01-2)).